We begin with the raw amino-acid sequence, 353 residues long: tRNA-specific 2-thiouridylase MnmA 2 (353 aa).

Residues 9-16 (AMSGGVDS) and methionine 35 each bind ATP. Cysteine 98 (nucleophile) is an active-site residue. An intrachain disulfide couples cysteine 98 to cysteine 194. Residue glycine 122 coordinates ATP. Residues 144-146 (KDQ) form an interaction with tRNA region. The active-site Cysteine persulfide intermediate is the cysteine 194. Residues 300–301 (RY) form an interaction with tRNA region.

This sequence belongs to the MnmA/TRMU family.

Its subcellular location is the cytoplasm. It carries out the reaction S-sulfanyl-L-cysteinyl-[protein] + uridine(34) in tRNA + AH2 + ATP = 2-thiouridine(34) in tRNA + L-cysteinyl-[protein] + A + AMP + diphosphate + H(+). In terms of biological role, catalyzes the 2-thiolation of uridine at the wobble position (U34) of tRNA, leading to the formation of s(2)U34. In Clostridium botulinum (strain Loch Maree / Type A3), this protein is tRNA-specific 2-thiouridylase MnmA 2.